A 727-amino-acid polypeptide reads, in one-letter code: Endothelin-converting enzyme homolog (727 aa).

Topologically, residues 1–44 (MSFNFSRYSGAYTTTFSFLLLALLIVSAVLLSRPYAPALLHAEE) are cytoplasmic. A helical; Signal-anchor for type II membrane protein membrane pass occupies residues 45–65 (AYCVSMSCVTAAASVLSLMDA). Residues 46 to 727 (YCVSMSCVTA…MNPVHKCEVW (682 aa)) form the Peptidase M13 domain. Cystine bridges form between Cys-47–Cys-52, Cys-70–Cys-712, Cys-78–Cys-672, Cys-134–Cys-392, and Cys-601–Cys-724. The Extracellular portion of the chain corresponds to 66–727 (TADPCSDFYQ…MNPVHKCEVW (662 aa)). N-linked (GlcNAc...) asparagine glycosylation is found at Asn-138, Asn-160, Asn-164, Asn-169, Asn-222, Asn-309, Asn-337, Asn-340, and Asn-511. A Zn(2+)-binding site is contributed by His-564. The active site involves Glu-565. His-568 is a Zn(2+) binding site. 2 N-linked (GlcNAc...) asparagine glycosylation sites follow: Asn-589 and Asn-608. Zn(2+) is bound at residue Glu-624. The Proton donor role is filled by Asp-628. Asn-656 is a glycosylation site (N-linked (GlcNAc...) asparagine).

The protein belongs to the peptidase M13 family. It depends on Zn(2+) as a cofactor. As to expression, highly expressed in brain and midgut, and to a lesser extent in fat body, ovaries, testes and haemocytes.

The protein resides in the cell membrane. The sequence is that of Endothelin-converting enzyme homolog from Locusta migratoria (Migratory locust).